Here is a 515-residue protein sequence, read N- to C-terminus: Histidine ammonia-lyase (515 aa).

A cross-link (5-imidazolinone (Ala-Gly)) is located at residues 145–147; that stretch reads ASG. Ser146 bears the 2,3-didehydroalanine (Ser) mark.

The protein belongs to the PAL/histidase family. In terms of processing, contains an active site 4-methylidene-imidazol-5-one (MIO), which is formed autocatalytically by cyclization and dehydration of residues Ala-Ser-Gly.

The protein resides in the cytoplasm. It carries out the reaction L-histidine = trans-urocanate + NH4(+). It participates in amino-acid degradation; L-histidine degradation into L-glutamate; N-formimidoyl-L-glutamate from L-histidine: step 1/3. This chain is Histidine ammonia-lyase, found in Gluconobacter oxydans (strain 621H) (Gluconobacter suboxydans).